Reading from the N-terminus, the 631-residue chain is 1-deoxy-D-xylulose-5-phosphate synthase (631 aa).

Residues His73 and 114–116 each bind thiamine diphosphate; that span reads GHS. Asp145 is a Mg(2+) binding site. Residues 146–147, Asn174, Tyr285, and Glu366 each bind thiamine diphosphate; that span reads GA. Mg(2+) is bound at residue Asn174.

This sequence belongs to the transketolase family. DXPS subfamily. In terms of assembly, homodimer. The cofactor is Mg(2+). Thiamine diphosphate serves as cofactor.

It carries out the reaction D-glyceraldehyde 3-phosphate + pyruvate + H(+) = 1-deoxy-D-xylulose 5-phosphate + CO2. Its pathway is metabolic intermediate biosynthesis; 1-deoxy-D-xylulose 5-phosphate biosynthesis; 1-deoxy-D-xylulose 5-phosphate from D-glyceraldehyde 3-phosphate and pyruvate: step 1/1. Functionally, catalyzes the acyloin condensation reaction between C atoms 2 and 3 of pyruvate and glyceraldehyde 3-phosphate to yield 1-deoxy-D-xylulose-5-phosphate (DXP). This is 1-deoxy-D-xylulose-5-phosphate synthase from Desulfitobacterium hafniense (strain Y51).